Here is a 707-residue protein sequence, read N- to C-terminus: Drebrin (707 aa).

Position 2 is an N-acetylalanine (alanine 2). Positions glycine 3–serine 134 constitute an ADF-H domain. Phosphoserine occurs at positions 141 and 142. Over residues glutamate 209–arginine 236 the composition is skewed to basic and acidic residues. Disordered regions lie at residues glutamate 209–glutamate 438, alanine 452–alanine 497, tryptophan 531–serine 557, leucine 582–alanine 609, and leucine 630–aspartate 707. Phosphoserine is present on serine 241. Residues aspartate 288–glutamate 298 show a composition bias toward basic and acidic residues. The span at serine 329 to proline 343 shows a compositional bias: low complexity. Serine 342 carries the phosphoserine modification. Positions arginine 355–proline 364 are enriched in polar residues. 2 positions are modified to phosphothreonine: threonine 377 and threonine 381. Positions proline 380–threonine 395 are enriched in polar residues. Serine 383, serine 385, and serine 391 each carry phosphoserine. Threonine 392 is subject to Phosphothreonine. Over residues glutamine 409–alanine 420 the composition is skewed to pro residues. Residues proline 428–glutamate 438 are compositionally biased toward basic and acidic residues. Serine 467 carries the post-translational modification Phosphoserine. At threonine 549 the chain carries Phosphothreonine. Over residues asparagine 639–serine 652 the composition is skewed to polar residues. Position 659 is a phosphoserine (serine 659). Residues proline 695–aspartate 707 show a composition bias toward acidic residues.

As to quaternary structure, interacts with RUFY. Interacts with CXCR4; this interaction is enhanced by antigenic stimulation. Interacts (via ADF-H domain) with ZMYND8 (via N-terminus); the interaction leads to sequestering of ZMYND8 in the cytoplasm. Post-translationally, ISGylated. In terms of tissue distribution, brain neurons.

The protein localises to the cytoplasm. It is found in the cell projection. It localises to the dendrite. Its subcellular location is the cell cortex. The protein resides in the cell junction. The protein localises to the growth cone. Functionally, actin cytoskeleton-organizing protein that plays a role in the formation of cell projections. Required for actin polymerization at immunological synapses (IS) and for the recruitment of the chemokine receptor CXCR4 to IS. Plays a role in dendritic spine morphogenesis and organization, including the localization of the dopamine receptor DRD1 to the dendritic spines. Involved in memory-related synaptic plasticity in the hippocampus. In Rattus norvegicus (Rat), this protein is Drebrin (Dbn1).